Here is a 302-residue protein sequence, read N- to C-terminus: Sulfate adenylyltransferase subunit 2 (302 aa).

Belongs to the PAPS reductase family. CysD subfamily. In terms of assembly, heterodimer composed of CysD, the smaller subunit, and CysN.

It carries out the reaction sulfate + ATP + H(+) = adenosine 5'-phosphosulfate + diphosphate. The protein operates within sulfur metabolism; hydrogen sulfide biosynthesis; sulfite from sulfate: step 1/3. Its function is as follows. With CysN forms the ATP sulfurylase (ATPS) that catalyzes the adenylation of sulfate producing adenosine 5'-phosphosulfate (APS) and diphosphate, the first enzymatic step in sulfur assimilation pathway. APS synthesis involves the formation of a high-energy phosphoric-sulfuric acid anhydride bond driven by GTP hydrolysis by CysN coupled to ATP hydrolysis by CysD. This chain is Sulfate adenylyltransferase subunit 2, found in Sodalis glossinidius (strain morsitans).